The following is a 122-amino-acid chain: Mth938 domain-containing protein (122 aa).

The MTH138-like domain stretch occupies residues 6–122 (IASLSWGQMK…RVGGVFHSTC (117 aa)).

Belongs to the AAMDC family.

It is found in the cytoplasm. Functionally, may play a role in preadipocyte differentiation and adipogenesis. The protein is Mth938 domain-containing protein (AAMDC) of Homo sapiens (Human).